The chain runs to 387 residues: DNA double-strand break repair protein Mre11 (387 aa).

The Mn(2+) site is built by Asp-11, His-13, Asp-52, and Asp-87. His-88 acts as the Proton donor in catalysis. The Mn(2+) site is built by His-159, His-190, and His-192.

It belongs to the MRE11/RAD32 family. Homodimer. Forms a heterotetramer composed of two Mre11 subunits and two Rad50 subunits. Interacts with HerA. Requires Mn(2+) as cofactor.

Its activity is regulated as follows. Nuclease activity is regulated by Rad50. Functionally, part of the Rad50/Mre11 complex, which is involved in the early steps of DNA double-strand break (DSB) repair. The complex may facilitate opening of the processed DNA ends to aid in the recruitment of HerA and NurA. Mre11 binds to DSB ends and has both double-stranded 3'-5' exonuclease activity and single-stranded endonuclease activity. This Sulfurisphaera tokodaii (strain DSM 16993 / JCM 10545 / NBRC 100140 / 7) (Sulfolobus tokodaii) protein is DNA double-strand break repair protein Mre11.